A 95-amino-acid polypeptide reads, in one-letter code: uncharacterized protein (95 aa).

This is an uncharacterized protein from Human adenovirus B serotype 7 (HAdV-7).